A 272-amino-acid chain; its full sequence is Probable proteasome subunit alpha type-6 (272 aa).

Low complexity predominate over residues 243 to 261 (AARASRAAAEEPQAPTAEA). The interval 243–272 (AARASRAAAEEPQAPTAEAILDSADAMETD) is disordered.

It belongs to the peptidase T1A family. As to quaternary structure, the 26S proteasome consists of a 20S proteasome core and two 19S regulatory subunits. The 20S proteasome core is composed of 28 subunits that are arranged in four stacked rings, resulting in a barrel-shaped structure. The two end rings are each formed by seven alpha subunits, and the two central rings are each formed by seven beta subunits. The catalytic chamber with the active sites is on the inside of the barrel.

It localises to the cytoplasm. The protein localises to the nucleus. Functionally, the proteasome is a multicatalytic proteinase complex which is characterized by its ability to cleave peptides with Arg, Phe, Tyr, Leu, and Glu adjacent to the leaving group at neutral or slightly basic pH. The proteasome has an ATP-dependent proteolytic activity. The chain is Probable proteasome subunit alpha type-6 from Schizosaccharomyces pombe (strain 972 / ATCC 24843) (Fission yeast).